A 92-amino-acid chain; its full sequence is UPF0298 protein ABC2380 (92 aa).

This sequence belongs to the UPF0298 family.

It is found in the cytoplasm. This Shouchella clausii (strain KSM-K16) (Alkalihalobacillus clausii) protein is UPF0298 protein ABC2380.